Consider the following 824-residue polypeptide: Leucine--tRNA ligase (824 aa).

The short motif at 42-52 (PYPSGRIHMGH) is the 'HIGH' region element. Positions 581–585 (KMSKS) match the 'KMSKS' region motif. Residue Lys-584 participates in ATP binding.

It belongs to the class-I aminoacyl-tRNA synthetase family.

It localises to the cytoplasm. The enzyme catalyses tRNA(Leu) + L-leucine + ATP = L-leucyl-tRNA(Leu) + AMP + diphosphate. The sequence is that of Leucine--tRNA ligase from Geotalea uraniireducens (strain Rf4) (Geobacter uraniireducens).